We begin with the raw amino-acid sequence, 358 residues long: Protein RecA (358 aa).

An ATP-binding site is contributed by 66–73 (GPESSGKT).

Belongs to the RecA family.

The protein localises to the cytoplasm. Its function is as follows. Can catalyze the hydrolysis of ATP in the presence of single-stranded DNA, the ATP-dependent uptake of single-stranded DNA by duplex DNA, and the ATP-dependent hybridization of homologous single-stranded DNAs. It interacts with LexA causing its activation and leading to its autocatalytic cleavage. This is Protein RecA from Herpetosiphon aurantiacus (strain ATCC 23779 / DSM 785 / 114-95).